We begin with the raw amino-acid sequence, 95 residues long: Co-chaperonin GroES (95 aa).

It belongs to the GroES chaperonin family. Heptamer of 7 subunits arranged in a ring. Interacts with the chaperonin GroEL.

It localises to the cytoplasm. Together with the chaperonin GroEL, plays an essential role in assisting protein folding. The GroEL-GroES system forms a nano-cage that allows encapsulation of the non-native substrate proteins and provides a physical environment optimized to promote and accelerate protein folding. GroES binds to the apical surface of the GroEL ring, thereby capping the opening of the GroEL channel. The polypeptide is Co-chaperonin GroES (Methylocella silvestris (strain DSM 15510 / CIP 108128 / LMG 27833 / NCIMB 13906 / BL2)).